The chain runs to 404 residues: 2,3-bisphosphoglycerate-independent phosphoglycerate mutase (404 aa).

Positions 155 to 183 (LSDMIGDSDPHREGLPPEKIRPTDPSGDR) are disordered. The span at 162–183 (SDPHREGLPPEKIRPTDPSGDR) shows a compositional bias: basic and acidic residues.

Belongs to the BPG-independent phosphoglycerate mutase family. A-PGAM subfamily.

The catalysed reaction is (2R)-2-phosphoglycerate = (2R)-3-phosphoglycerate. It functions in the pathway carbohydrate degradation; glycolysis; pyruvate from D-glyceraldehyde 3-phosphate: step 3/5. Catalyzes the interconversion of 2-phosphoglycerate and 3-phosphoglycerate. The chain is 2,3-bisphosphoglycerate-independent phosphoglycerate mutase from Thermoplasma acidophilum (strain ATCC 25905 / DSM 1728 / JCM 9062 / NBRC 15155 / AMRC-C165).